A 111-amino-acid chain; its full sequence is Ribonuclease P protein component 1 (111 aa).

Belongs to the eukaryotic/archaeal RNase P protein component 1 family. In terms of assembly, consists of a catalytic RNA component and at least 4-5 protein subunits.

The protein resides in the cytoplasm. It carries out the reaction Endonucleolytic cleavage of RNA, removing 5'-extranucleotides from tRNA precursor.. Its function is as follows. Part of ribonuclease P, a protein complex that generates mature tRNA molecules by cleaving their 5'-ends. This is Ribonuclease P protein component 1 from Hyperthermus butylicus (strain DSM 5456 / JCM 9403 / PLM1-5).